We begin with the raw amino-acid sequence, 314 residues long: Ribosomal protein L11 methyltransferase (314 aa).

T163, G184, D206, and N248 together coordinate S-adenosyl-L-methionine.

The protein belongs to the methyltransferase superfamily. PrmA family.

The protein resides in the cytoplasm. It carries out the reaction L-lysyl-[protein] + 3 S-adenosyl-L-methionine = N(6),N(6),N(6)-trimethyl-L-lysyl-[protein] + 3 S-adenosyl-L-homocysteine + 3 H(+). In terms of biological role, methylates ribosomal protein L11. The protein is Ribosomal protein L11 methyltransferase of Lactobacillus delbrueckii subsp. bulgaricus (strain ATCC 11842 / DSM 20081 / BCRC 10696 / JCM 1002 / NBRC 13953 / NCIMB 11778 / NCTC 12712 / WDCM 00102 / Lb 14).